The primary structure comprises 215 residues: Probable phosphoglycerate mutase GpmB (215 aa).

Residues R8–N15, Q21–G22, R58, K60, E82–M85, R104–R105, and G151–I152 contribute to the substrate site. H9 acts as the Tele-phosphohistidine intermediate in catalysis. The Proton donor/acceptor role is filled by E82.

It belongs to the phosphoglycerate mutase family. GpmB subfamily.

It carries out the reaction (2R)-2-phosphoglycerate = (2R)-3-phosphoglycerate. It functions in the pathway carbohydrate degradation; glycolysis; pyruvate from D-glyceraldehyde 3-phosphate: step 3/5. In Salmonella agona (strain SL483), this protein is Probable phosphoglycerate mutase GpmB.